Here is a 524-residue protein sequence, read N- to C-terminus: Protein tweety homolog 3 (524 aa).

Over 1 to 42 (MAGVSYAAPWWVSLLHRLPHFDLRWEATSSQFRPEDADYQQA) the chain is Extracellular. Residues 43–63 (LLLLGATALACLALDLLFLLF) form a helical membrane-spanning segment. Residues 64–86 (YSFWLCCRRRKTDEHLDADCCCT) are Cytoplasmic-facing. A helical membrane pass occupies residues 87–107 (AWCVIITTLVCSAGIAVGFYG). The Extracellular segment spans residues 108–211 (NGETSDGIHR…VDLYDWYRWL (104 aa)). 2 residues coordinate Ca(2+): Glu-110 and Asp-113. Asn-126 and Asn-144 each carry an N-linked (GlcNAc...) asparagine glycan. The chain crosses the membrane as a helical span at residues 212–232 (GYLGLLLLDVIICLLVLVGLI). Residues 233-236 (RSSK) lie on the Cytoplasmic side of the membrane. Residues 237–257 (GILVGVCLLGVLALVISWGAL) traverse the membrane as a helical segment. Topologically, residues 258-386 (GLELAVSVGS…LTGFCYDGVE (129 aa)) are extracellular. 2 disulfide bridges follow: Cys-271/Cys-381 and Cys-299/Cys-366. N-linked (GlcNAc...) asparagine glycosylation is present at Asn-351. The chain crosses the membrane as a helical span at residues 387–407 (GLIYLALFSFVTALMFSSIVC). Residues 408-524 (SIPHTWQQKR…PRPDSSGSGH (117 aa)) lie on the Cytoplasmic side of the membrane. Disordered stretches follow at residues 413–435 (WQQK…RQAH) and 485–524 (RCEN…GSGH). Ser-496 carries the post-translational modification Phosphoserine. A PY-motif; mediates interaction with NEDD4L motif is present at residues 498-501 (PPSY). A compositionally biased stretch (polar residues) spans 501–524 (YTSSMRAKYLATSQPRPDSSGSGH). Phosphoserine is present on residues Ser-504 and Ser-522.

The protein belongs to the tweety family. In terms of assembly, homotetramer; disulfide-linked. Forms cis-homodimers in the presence of Ca(2+). Interacts with NEDD4L. Ubiquitinated by NEDD4L. Post-translationally, N-glycosylated. In terms of tissue distribution, expressed in excitable tissues. Expressed in the brain, heart, skeletal muscle, colon, spleen, kidney and peripheral blood leukocytes. Also expressed in fat, the pancreas, thymus, and uterus.

It localises to the cell membrane. The catalysed reaction is chloride(in) = chloride(out). It catalyses the reaction L-glutamate(out) = L-glutamate(in). Inhibited by (4-[(2-butyl-6,7-dichloro-2- cyclopentyl-2,3-dihydro-1-oxo-1H-inden-5-yl)oxy]butanoic acid), genistein and PD98059 (MEK1 inhibitor). Calcium-independent, swelling-dependent volume-regulated anion channel (VRAC-swell) which plays a pivotal role in the process of regulatory volume decrease (RVD) in the brain through the efflux of anions like chloride and organic osmolytes like glutamate. Probable large-conductance Ca(2+)-activated chloride channel. The sequence is that of Protein tweety homolog 3 (Ttyh3) from Mus musculus (Mouse).